Here is a 204-residue protein sequence, read N- to C-terminus: Large ribosomal subunit protein eL15 (204 aa).

Belongs to the eukaryotic ribosomal protein eL15 family. As to quaternary structure, component of the large ribosomal subunit.

Its subcellular location is the cytoplasm. Its function is as follows. Component of the large ribosomal subunit. The ribosome is a large ribonucleoprotein complex responsible for the synthesis of proteins in the cell. The protein is Large ribosomal subunit protein eL15 (rpl15) of Hypophthalmichthys molitrix (Silver carp).